We begin with the raw amino-acid sequence, 1079 residues long: Tudor domain-containing protein 7 (1079 aa).

Residues 1-69 (MLRAVLQANK…EVTCYAVACK (69 aa)) enclose the HTH OST-type 1 domain. Positions 109–132 (KPKITLRQPGFTPPQEMMIRKPVP) are disordered. 2 consecutive HTH OST-type domains span residues 218 to 288 (DLPV…YATT) and 330 to 398 (PKDE…YGKS). 2 consecutive Tudor domains span residues 494–551 (PLRV…FYTL) and 684–741 (LPFC…LLRD).

The protein belongs to the TDRD7 family.

It is found in the cytoplasm. Its function is as follows. Component of specific cytoplasmic RNA granules involved in post-transcriptional regulation of specific genes: probably acts by binding to specific mRNAs and regulating their translation. Probably required during spermatogenesis. This is Tudor domain-containing protein 7 (tdrd7) from Xenopus laevis (African clawed frog).